We begin with the raw amino-acid sequence, 114 residues long: MARVTVEDCVDKVPNRFDLVLLAAERARAISGGAELTVDRDRDKNPVVALREIAEETVRPAVLKENLIQSLQRVLPDDDDEVDEIGSLSQSAEALRITAAAPVRNTSLGADYDG.

This sequence belongs to the RNA polymerase subunit omega family. As to quaternary structure, the RNAP catalytic core consists of 2 alpha, 1 beta, 1 beta' and 1 omega subunit. When a sigma factor is associated with the core the holoenzyme is formed, which can initiate transcription.

It carries out the reaction RNA(n) + a ribonucleoside 5'-triphosphate = RNA(n+1) + diphosphate. Promotes RNA polymerase assembly. Latches the N- and C-terminal regions of the beta' subunit thereby facilitating its interaction with the beta and alpha subunits. The chain is DNA-directed RNA polymerase subunit omega from Novosphingobium aromaticivorans (strain ATCC 700278 / DSM 12444 / CCUG 56034 / CIP 105152 / NBRC 16084 / F199).